A 120-amino-acid chain; its full sequence is Protein TCL1B4 (120 aa).

It belongs to the TCL1 family.

The chain is Protein TCL1B4 (Tcl1b4) from Mus musculus (Mouse).